Consider the following 130-residue polypeptide: DNA-directed RNA polymerase subunit omega (130 aa).

The tract at residues 107 to 130 is disordered; it reads SLDVSQESHDDEIDDQDSGEEVPI. Residues 115–130 show a composition bias toward acidic residues; that stretch reads HDDEIDDQDSGEEVPI.

It belongs to the RNA polymerase subunit omega family. The RNAP catalytic core consists of 2 alpha, 1 beta, 1 beta' and 1 omega subunit. When a sigma factor is associated with the core the holoenzyme is formed, which can initiate transcription.

The enzyme catalyses RNA(n) + a ribonucleoside 5'-triphosphate = RNA(n+1) + diphosphate. Promotes RNA polymerase assembly. Latches the N- and C-terminal regions of the beta' subunit thereby facilitating its interaction with the beta and alpha subunits. This is DNA-directed RNA polymerase subunit omega from Wolbachia pipientis subsp. Culex pipiens (strain wPip).